The following is a 424-amino-acid chain: Anaerobic glycerol-3-phosphate dehydrogenase subunit B (424 aa).

It belongs to the anaerobic G-3-P dehydrogenase subunit B family. As to quaternary structure, composed of a catalytic GlpA/B dimer and of membrane bound GlpC. FMN is required as a cofactor.

The enzyme catalyses a quinone + sn-glycerol 3-phosphate = dihydroxyacetone phosphate + a quinol. Its pathway is polyol metabolism; glycerol degradation via glycerol kinase pathway; glycerone phosphate from sn-glycerol 3-phosphate (anaerobic route): step 1/1. Functionally, conversion of glycerol 3-phosphate to dihydroxyacetone. Uses fumarate or nitrate as electron acceptor. This is Anaerobic glycerol-3-phosphate dehydrogenase subunit B from Yersinia pestis bv. Antiqua (strain Antiqua).